Here is an 86-residue protein sequence, read N- to C-terminus: Small ribosomal subunit protein bS16 (86 aa).

The protein belongs to the bacterial ribosomal protein bS16 family.

The polypeptide is Small ribosomal subunit protein bS16 (Xylella fastidiosa (strain M12)).